Reading from the N-terminus, the 463-residue chain is RuvB-like 2 (463 aa).

Ala2 is modified (N-acetylalanine). Lys9 is covalently cross-linked (Glycyl lysine isopeptide (Lys-Gly) (interchain with G-Cter in SUMO2)). 77-84 (GQPGTGKT) is a binding site for ATP. Ser437 carries the phosphoserine modification. Glycyl lysine isopeptide (Lys-Gly) (interchain with G-Cter in SUMO2) cross-links involve residues Lys444 and Lys456.

It belongs to the RuvB family. Forms homohexameric rings. Can form a dodecamer with RUVBL1 made of two stacked hexameric rings; however, even though RUVBL1 and RUVBL2 are present in equimolar ratio, the oligomeric status of each hexamer is not known. Oligomerization may regulate binding to nucleic acids and conversely, binding to nucleic acids may affect the dodecameric assembly. Interaction of the complex with DHX34 results in conformational changes of the N-terminus of the RUVBL2 subunits, resulting in loss of nucleotide binding ability and ATP hydrolysis of the complex. Interacts with the transcriptional activation domain of MYC. Interacts with ATF2. Component of the RNA polymerase II holoenzyme complex. May also act to bridge the LEF1/TCF1-CTNNB1 complex and TBP. Component of the NuA4 histone acetyltransferase complex which contains the catalytic subunit KAT5/TIP60 and the subunits EP400, TRRAP/PAF400, BRD8/SMAP, EPC1, DMAP1/DNMAP1, RUVBL1/TIP49, RUVBL2, ING3, actin, ACTL6A/BAF53A, MORF4L1/MRG15, MORF4L2/MRGX, MRGBP, YEATS4/GAS41, VPS72/YL1 and MEAF6. The NuA4 complex interacts with MYC and the adenovirus E1A protein. RUVBL2 interacts with EP400. Component of a NuA4-related complex which contains EP400, TRRAP/PAF400, SRCAP, BRD8/SMAP, EPC1, DMAP1/DNMAP1, RUVBL1/TIP49, RUVBL2, actin, ACTL6A/BAF53A, VPS72 and YEATS4/GAS41. Interacts with NPAT. Component of the chromatin-remodeling INO80 complex; specifically part of a complex module associated with the helicase ATP-binding and the helicase C-terminal domain of INO80. Component of some MLL1/MLL complex, at least composed of the core components KMT2A/MLL1, ASH2L, HCFC1/HCF1, WDR5 and RBBP5, as well as the facultative components BACC1, CHD8, E2F6, HSP70, INO80C, KANSL1, LAS1L, MAX, MCRS1, MGA, MYST1/MOF, PELP1, PHF20, PRP31, RING2, RUVB1/TIP49A, RUVB2/TIP49B, SENP3, TAF1, TAF4, TAF6, TAF7, TAF9 and TEX10. Interacts with IGHMBP2. Interacts with TELO2. Interacts with HINT1. Component of a SWR1-like complex. Component of the R2TP complex composed at least of RUVBL1, RUVBL2, RPAP3 and PIHD1. Component of the PAQosome complex which is responsible for the biogenesis of several protein complexes and which consists of R2TP complex members RUVBL1, RUVBL2, RPAP3 and PIH1D1, URI complex members PFDN2, PFDN6, PDRG1, UXT and URI1 as well as ASDURF, POLR2E and DNAAF10/WDR92. Interacts with ITFG1. Interacts with ZMYND10. Interacts with WAC; WAC positively regulates MTOR activity by promoting the assembly of the TTT complex composed of TELO2, TTI1 and TTI2 and the RUVBL complex composed of RUVBL1 and RUVBL2 into the TTT-RUVBL complex which leads to the dimerization of the mTORC1 complex and its subsequent activation. Forms a complex with APPL1 and APPL2. Interacts with ZNHIT2 (via HIT-type zinc finger) in the presence of ATP or ADP; shows a stronger interaction in the presence of ADP. The RUVBL1/RUVBL2 complex interacts with ZNHIT1 (via HIT-type zinc finger), ZNHIT3 (via HIT-type zinc finger), ZNHIT6 (via HIT-type zinc finger) and DDX59/ZNHIT5 (via HIT-type zinc finger) in the presence of ADP. Interacts with NOPCHAP1; the interaction is direct and disrupted upon ATP binding. Interacts with SMG1. As to quaternary structure, (Microbial infection) Interacts with Mumps L polymerase; this interaction regulates the viral transcription. In terms of tissue distribution, ubiquitously expressed. Highly expressed in testis and thymus.

Its subcellular location is the nucleus matrix. It is found in the nucleus. The protein localises to the nucleoplasm. It localises to the cytoplasm. The protein resides in the membrane. Its subcellular location is the dynein axonemal particle. It carries out the reaction ATP + H2O = ADP + phosphate + H(+). Functionally, possesses single-stranded DNA-stimulated ATPase and ATP-dependent DNA helicase (5' to 3') activity; hexamerization is thought to be critical for ATP hydrolysis and adjacent subunits in the ring-like structure contribute to the ATPase activity. Component of the NuA4 histone acetyltransferase complex which is involved in transcriptional activation of select genes principally by acetylation of nucleosomal histones H4 and H2A. This modification may both alter nucleosome -DNA interactions and promote interaction of the modified histones with other proteins which positively regulate transcription. This complex may be required for the activation of transcriptional programs associated with oncogene and proto-oncogene mediated growth induction, tumor suppressor mediated growth arrest and replicative senescence, apoptosis, and DNA repair. The NuA4 complex ATPase and helicase activities seem to be, at least in part, contributed by the association of RUVBL1 and RUVBL2 with EP400. NuA4 may also play a direct role in DNA repair when recruited to sites of DNA damage. Component of a SWR1-like complex that specifically mediates the removal of histone H2A.Z/H2AZ1 from the nucleosome. Proposed core component of the chromatin remodeling INO80 complex which exhibits DNA- and nucleosome-activated ATPase activity and catalyzes ATP-dependent nucleosome sliding. Plays an essential role in oncogenic transformation by MYC and also modulates transcriptional activation by the LEF1/TCF1-CTNNB1 complex. May also inhibit the transcriptional activity of ATF2. Involved in the endoplasmic reticulum (ER)-associated degradation (ERAD) pathway where it negatively regulates expression of ER stress response genes. May play a role in regulating the composition of the U5 snRNP complex. This is RuvB-like 2 (RUVBL2) from Homo sapiens (Human).